A 112-amino-acid chain; its full sequence is Putative pterin-4-alpha-carbinolamine dehydratase (112 aa).

Belongs to the pterin-4-alpha-carbinolamine dehydratase family.

The enzyme catalyses (4aS,6R)-4a-hydroxy-L-erythro-5,6,7,8-tetrahydrobiopterin = (6R)-L-erythro-6,7-dihydrobiopterin + H2O. In Vibrio parahaemolyticus serotype O3:K6 (strain RIMD 2210633), this protein is Putative pterin-4-alpha-carbinolamine dehydratase.